A 301-amino-acid chain; its full sequence is Ribosomal RNA small subunit methyltransferase H (301 aa).

Residues 33–35 (GGH), Asp-52, Phe-79, Asp-100, and Gln-107 contribute to the S-adenosyl-L-methionine site.

The protein belongs to the methyltransferase superfamily. RsmH family.

Its subcellular location is the cytoplasm. It catalyses the reaction cytidine(1402) in 16S rRNA + S-adenosyl-L-methionine = N(4)-methylcytidine(1402) in 16S rRNA + S-adenosyl-L-homocysteine + H(+). Specifically methylates the N4 position of cytidine in position 1402 (C1402) of 16S rRNA. This Mycoplasmopsis synoviae (strain 53) (Mycoplasma synoviae) protein is Ribosomal RNA small subunit methyltransferase H.